We begin with the raw amino-acid sequence, 589 residues long: Arginine--tRNA ligase (589 aa).

Positions 131–141 (ANPTGPLHVGH) match the 'HIGH' region motif.

It belongs to the class-I aminoacyl-tRNA synthetase family. As to quaternary structure, monomer.

It localises to the cytoplasm. The catalysed reaction is tRNA(Arg) + L-arginine + ATP = L-arginyl-tRNA(Arg) + AMP + diphosphate. The sequence is that of Arginine--tRNA ligase from Legionella pneumophila (strain Paris).